We begin with the raw amino-acid sequence, 273 residues long: Large ribosomal subunit protein uL2 (273 aa).

The segment at 221-263 is disordered; that stretch reads RGTAMNPVDHPHGGGEGRNFGKHPVTPWGVQTKGKKTRHNKRT. The segment covering 253–263 has biased composition (basic residues); sequence KGKKTRHNKRT.

The protein belongs to the universal ribosomal protein uL2 family. In terms of assembly, part of the 50S ribosomal subunit. Forms a bridge to the 30S subunit in the 70S ribosome.

One of the primary rRNA binding proteins. Required for association of the 30S and 50S subunits to form the 70S ribosome, for tRNA binding and peptide bond formation. It has been suggested to have peptidyltransferase activity; this is somewhat controversial. Makes several contacts with the 16S rRNA in the 70S ribosome. This chain is Large ribosomal subunit protein uL2, found in Histophilus somni (strain 129Pt) (Haemophilus somnus).